Here is a 264-residue protein sequence, read N- to C-terminus: Probable pectate lyase D (264 aa).

The signal sequence occupies residues M1–A17. Residue N60 is glycosylated (N-linked (GlcNAc...) asparagine). The tract at residues Y234 to C264 is disordered. Residues E235–Q245 show a composition bias toward acidic residues. Over residues E246 to Q256 the composition is skewed to polar residues.

Belongs to the polysaccharide lyase 3 family. Ca(2+) is required as a cofactor.

It localises to the secreted. The enzyme catalyses Eliminative cleavage of (1-&gt;4)-alpha-D-galacturonan to give oligosaccharides with 4-deoxy-alpha-D-galact-4-enuronosyl groups at their non-reducing ends.. Pectinolytic enzyme consist of four classes of enzymes: pectin lyase, polygalacturonase, pectin methylesterase and rhamnogalacturonase. Among pectinolytic enzymes, pectin lyase is the most important in depolymerization of pectin, since it cleaves internal glycosidic bonds of highly methylated pectins. Favors pectate, the anion, over pectin, the methyl ester. This is Probable pectate lyase D (plyD) from Emericella nidulans (strain FGSC A4 / ATCC 38163 / CBS 112.46 / NRRL 194 / M139) (Aspergillus nidulans).